Consider the following 41-residue polypeptide: trp operon leader peptide (41 aa).

Functionally, this protein is involved in control of the biosynthesis of tryptophan. This Vibrio parahaemolyticus serotype O3:K6 (strain RIMD 2210633) protein is trp operon leader peptide (trpL).